Here is a 612-residue protein sequence, read N- to C-terminus: 1,8-cineole synthase, chloroplastic (612 aa).

The N-terminal 52 residues, Met1–Thr52, are a transit peptide targeting the chloroplast. Positions 363, 367, and 515 each coordinate Mg(2+). The DDXXD motif motif lies at Asp363 to Asp367.

It belongs to the terpene synthase family. Tpsd subfamily. The cofactor is Mg(2+). Requires Mn(2+) as cofactor.

It localises to the plastid. Its subcellular location is the chloroplast. It carries out the reaction (2E)-geranyl diphosphate + H2O = 1,8-cineole + diphosphate. Its pathway is terpene metabolism; oleoresin biosynthesis. Its function is as follows. Terpene synthase (TPS) involved in the biosynthesis of monoterpene natural products included in conifer oleoresin secretions and volatile emissions; these compounds contribute to biotic and abiotic stress defense against herbivores and pathogens. Catalyzes the conversion of (2E)-geranyl diphosphate (GPP) to 1,8-cineole. The polypeptide is 1,8-cineole synthase, chloroplastic (Picea engelmannii x Picea glauca (Hybrid white spruce)).